The sequence spans 159 residues: MTRMIIQNSGSWTLCGAVLLFVLPLIPTPEALQHTEEGLEMLFRERSQSDWENVWHQETHSRCRDKLVRQLYWACEKDIYRLTRRNKKRTGNDEAWIKKTTTEPDGSTWLHVNYANMFLRSRRSDGNTPSISNECCTKAGCTWEEYAEYCPSNKRRNHY.

An N-terminal signal peptide occupies residues 1–31 (MTRMIIQNSGSWTLCGAVLLFVLPLIPTPEA). Disulfide bonds link Cys-63-Cys-136, Cys-75-Cys-150, and Cys-135-Cys-141. Residues 90–121 (TGNDEAWIKKTTTEPDGSTWLHVNYANMFLRS) constitute a propeptide, connecting peptide.

The protein belongs to the insulin family. As to quaternary structure, heterodimer of a B chain and an A chain linked by two disulfide bonds. In terms of tissue distribution, broadly expressed at a low level throughout the embryo, except the yolk. Expressed at a moderate level in the embryonic midgut. Larval expression is restricted to ten cells of the ventral nerve cord - in four pairs of centrally located cells in the most posterior abdominal segments and in one pair of dorsally located cells in the A1 or A2 segments.

The protein localises to the secreted. Its function is as follows. Possible ligand of InR/insulin-like receptor. The chain is Insulin-like peptide 7 from Drosophila melanogaster (Fruit fly).